The following is a 289-amino-acid chain: Nucleotide-binding protein LAF_0356 (289 aa).

12–19 lines the ATP pocket; that stretch reads GMSGAGKT. A GTP-binding site is contributed by 62–65; sequence DSRS.

It belongs to the RapZ-like family.

Its function is as follows. Displays ATPase and GTPase activities. The sequence is that of Nucleotide-binding protein LAF_0356 from Limosilactobacillus fermentum (strain NBRC 3956 / LMG 18251) (Lactobacillus fermentum).